The primary structure comprises 104 residues: Large ribosomal subunit protein uL24 (104 aa).

It belongs to the universal ribosomal protein uL24 family. Part of the 50S ribosomal subunit.

In terms of biological role, one of two assembly initiator proteins, it binds directly to the 5'-end of the 23S rRNA, where it nucleates assembly of the 50S subunit. Its function is as follows. One of the proteins that surrounds the polypeptide exit tunnel on the outside of the subunit. This is Large ribosomal subunit protein uL24 from Hydrogenovibrio crunogenus (strain DSM 25203 / XCL-2) (Thiomicrospira crunogena).